The sequence spans 592 residues: A-type ATP synthase subunit A (592 aa).

233-240 (GPFGSGKT) contributes to the ATP binding site.

The protein belongs to the ATPase alpha/beta chains family. Has multiple subunits with at least A(3), B(3), C, D, E, F, H, I and proteolipid K(x).

It localises to the cell membrane. The enzyme catalyses ATP + H2O + 4 H(+)(in) = ADP + phosphate + 5 H(+)(out). Its function is as follows. Component of the A-type ATP synthase that produces ATP from ADP in the presence of a proton gradient across the membrane. The A chain is the catalytic subunit. This Saccharolobus islandicus (strain Y.N.15.51 / Yellowstone #2) (Sulfolobus islandicus) protein is A-type ATP synthase subunit A.